We begin with the raw amino-acid sequence, 469 residues long: Nuclear hormone receptor family member nhr-154 (469 aa).

A DNA-binding region (nuclear receptor) is located at residues 80–159; the sequence is PSKCLVCRNP…VGMNPMAIQA (80 aa). 2 consecutive NR C4-type zinc fingers follow at residues 83–103 and 119–142; these read CLVCRNPAIGYHYDVPSCNGC and CAKQKKCMDGTEPVDMSKRLCRAC. The NR LBD domain maps to 230–459; that stretch reads LDSKPVLVVT…KMGTTFRKCI (230 aa).

This sequence belongs to the nuclear hormone receptor family.

The protein resides in the nucleus. In terms of biological role, orphan nuclear receptor. This chain is Nuclear hormone receptor family member nhr-154 (nhr-154), found in Caenorhabditis elegans.